The following is a 328-amino-acid chain: Tetraacyldisaccharide 4'-kinase (328 aa).

Residue 55–62 (TAGGNGKT) coordinates ATP.

This sequence belongs to the LpxK family.

The catalysed reaction is a lipid A disaccharide + ATP = a lipid IVA + ADP + H(+). It functions in the pathway glycolipid biosynthesis; lipid IV(A) biosynthesis; lipid IV(A) from (3R)-3-hydroxytetradecanoyl-[acyl-carrier-protein] and UDP-N-acetyl-alpha-D-glucosamine: step 6/6. In terms of biological role, transfers the gamma-phosphate of ATP to the 4'-position of a tetraacyldisaccharide 1-phosphate intermediate (termed DS-1-P) to form tetraacyldisaccharide 1,4'-bis-phosphate (lipid IVA). This Escherichia coli O6:K15:H31 (strain 536 / UPEC) protein is Tetraacyldisaccharide 4'-kinase.